The sequence spans 429 residues: Zinc metalloproteinase nas-17 (429 aa).

Positions 1-21 (MFLRPSTLLLTLFLALVAGSA) are cleaved as a signal peptide. N-linked (GlcNAc...) asparagine glycosylation is present at Asn-54. The 190-residue stretch at 62 to 251 (RQITKIWKKW…VNINVRYSCG (190 aa)) folds into the Peptidase M12A domain. Disulfide bonds link Cys-104/Cys-250, Cys-125/Cys-144, Cys-252/Cys-272, and Cys-274/Cys-283. Residue His-152 coordinates Zn(2+). Glu-153 is an active-site residue. Residues His-156 and His-162 each coordinate Zn(2+). The EGF-like domain maps to 245 to 284 (NVRYSCGCAKSLTCENGGYTNPSNCATCVCPTGFAGTLCN).

The cofactor is Zn(2+).

It localises to the secreted. Metalloprotease. In Caenorhabditis elegans, this protein is Zinc metalloproteinase nas-17 (nas-17).